The primary structure comprises 920 residues: Anillin-related medial ring protein mid1 (920 aa).

Residues 1–452 (MKEQEFSYRE…LSSEDLRHPS (452 aa)) form a disordered region. A phosphoserine mark is found at Ser15 and Ser24. The residue at position 34 (Thr34) is a Phosphothreonine. 2 positions are modified to phosphoserine: Ser46 and Ser62. The short motif at 69 to 81 (LNVATDLLESLDL) is the Nuclear export sequence (NES) 1 element. Ser95 carries the phosphoserine modification. Residues 461–481 (RTYSNYCENEPNKSSQSLVSS) show a composition bias toward polar residues. Ser531 carries the phosphoserine modification. Positions 538–561 (DLPSQDKSTSYEVPNGTENQSPRP) are disordered. Residues 542-561 (QDKSTSYEVPNGTENQSPRP) are compositionally biased toward polar residues. The segment at 551–920 (PNGTENQSPR…WLQEYVNFMA (370 aa)) is cryptic lipid-binding C2 domain. Residues 681-710 (RKFFDKLFNRRKKRKLNKAAAVENSKAKKS) carry the Nuclear localization sequence (NLS) motif. The Nuclear export sequence (NES) 2 signature appears at 763–773 (LGNLTLTCLYI). The 100-residue stretch at 802–901 (LYNEGYLYRL…WLQVMNSRSF (100 aa)) folds into the PH domain.

In terms of assembly, homodimer. Interacts with blt1 and cdr2. Interacts with gef2. Interacts with plo1 and rng2. Interacts with fhk2 and sep1. Interacts with clp1. Post-translationally, phosphorylated. At the onset of mitosis, becomes hyperphosphorylated, leaves the nucleus, and forms a medial ring. Phosphorylation by plo1 and other kinases may contribute to solubilizing mid1 for export from the nucleus. Phosphorylation by sid2 drives removal from the cortex at the actomyosin contractile ring constriction onset.

Its subcellular location is the nucleus. The protein localises to the cytoplasm. It localises to the cell cortex. The protein resides in the cytoskeleton. In terms of biological role, scaffold protein that anchors the contractile ring (CR) at the cell equator during cytokinesis. At the onset of mitosis, membrane-bound oligomers of mid1 assemble recruitment platforms for cytokinetic ring components at the medial cortex and stabilize the ring position during its compaction. Recruits dephosphorylated myo2, but also rng2, clp1 and cdc15 to nodes and to place cytokinetic nodes around the cell equator the medial cortex to promote the ring assembly in cooperation with F-actin. Necessary to stabilize the mitotic spindle perpendicular to the axis of cell division. Also recruits the cdr2 kinase to the CR. In the nucleus, binds to the promoter regions of M-G1 transcribed genes to negatively regulate their expression. This Schizosaccharomyces pombe (strain 972 / ATCC 24843) (Fission yeast) protein is Anillin-related medial ring protein mid1.